The sequence spans 472 residues: Tyrosine--tRNA ligase, mitochondrial (472 aa).

Position 72 (Y72) interacts with L-tyrosine. D76 is an ATP binding site. Residues P77–H86 carry the 'HIGH' region motif. Positions 116, 216, 220, 223, and 242 each coordinate L-tyrosine. Residues I269 and K279 each contribute to the ATP site. Residues K276–S280 carry the 'KMSKS' region motif. N6-acetyllysine occurs at positions 350 and 362.

The protein belongs to the class-I aminoacyl-tRNA synthetase family. Homodimer.

It is found in the mitochondrion matrix. The catalysed reaction is tRNA(Tyr) + L-tyrosine + ATP = L-tyrosyl-tRNA(Tyr) + AMP + diphosphate + H(+). In terms of biological role, catalyzes the attachment of tyrosine to tRNA(Tyr) in a two-step reaction: tyrosine is first activated by ATP to form Tyr-AMP and then transferred to the acceptor end of tRNA(Tyr). The protein is Tyrosine--tRNA ligase, mitochondrial (Yars2) of Mus musculus (Mouse).